A 279-amino-acid chain; its full sequence is Energy-coupling factor transporter ATP-binding protein EcfA1 (279 aa).

Residues 6-240 (VRLEHVFYKY…ADAMREIGLG (235 aa)) form the ABC transporter domain. An ATP-binding site is contributed by 40–47 (GHNGSGKS).

The protein belongs to the ABC transporter superfamily. Energy-coupling factor EcfA family. Forms a stable energy-coupling factor (ECF) transporter complex composed of 2 membrane-embedded substrate-binding proteins (S component), 2 ATP-binding proteins (A component) and 2 transmembrane proteins (T component).

Its subcellular location is the cell membrane. ATP-binding (A) component of a common energy-coupling factor (ECF) ABC-transporter complex. Unlike classic ABC transporters this ECF transporter provides the energy necessary to transport a number of different substrates. The polypeptide is Energy-coupling factor transporter ATP-binding protein EcfA1 (Listeria monocytogenes serovar 1/2a (strain ATCC BAA-679 / EGD-e)).